The sequence spans 246 residues: Large ribosomal subunit protein uL3 (246 aa).

2 disordered regions span residues 140-162 and 215-246; these read SHRS…NKKM and DVPL…EENA. Q151 is modified (N5-methylglutamine). Positions 234-246 are enriched in low complexity; it reads EAAPEAPASEENA.

This sequence belongs to the universal ribosomal protein uL3 family. As to quaternary structure, part of the 50S ribosomal subunit. Forms a cluster with proteins L14 and L19. Methylated by PrmB.

Its function is as follows. One of the primary rRNA binding proteins, it binds directly near the 3'-end of the 23S rRNA, where it nucleates assembly of the 50S subunit. The protein is Large ribosomal subunit protein uL3 of Methylorubrum extorquens (strain PA1) (Methylobacterium extorquens).